A 131-amino-acid chain; its full sequence is Large ribosomal subunit protein bL17 (131 aa).

Belongs to the bacterial ribosomal protein bL17 family. As to quaternary structure, part of the 50S ribosomal subunit. Contacts protein L32.

This chain is Large ribosomal subunit protein bL17, found in Cupriavidus necator (strain ATCC 17699 / DSM 428 / KCTC 22496 / NCIMB 10442 / H16 / Stanier 337) (Ralstonia eutropha).